The chain runs to 159 residues: Protein-export protein SecB (159 aa).

Belongs to the SecB family. In terms of assembly, homotetramer, a dimer of dimers. One homotetramer interacts with 1 SecA dimer.

The protein resides in the cytoplasm. Functionally, one of the proteins required for the normal export of preproteins out of the cell cytoplasm. It is a molecular chaperone that binds to a subset of precursor proteins, maintaining them in a translocation-competent state. It also specifically binds to its receptor SecA. The polypeptide is Protein-export protein SecB (Burkholderia mallei (strain NCTC 10229)).